A 315-amino-acid chain; its full sequence is Methionyl-tRNA formyltransferase (315 aa).

Positions 2-189 (SDSLRIIFAG…LITTLKQLAD (188 aa)) are N-terminal domain. 113 to 116 (SLLP) is a binding site for (6S)-5,6,7,8-tetrahydrofolate. Residues 210–315 (KEEARIDWSL…EWFIPGNRLA (106 aa)) are C-terminal domain.

It belongs to the Fmt family.

It catalyses the reaction L-methionyl-tRNA(fMet) + (6R)-10-formyltetrahydrofolate = N-formyl-L-methionyl-tRNA(fMet) + (6S)-5,6,7,8-tetrahydrofolate + H(+). Its function is as follows. Attaches a formyl group to the free amino group of methionyl-tRNA(fMet). The formyl group appears to play a dual role in the initiator identity of N-formylmethionyl-tRNA by promoting its recognition by IF2 and preventing the misappropriation of this tRNA by the elongation apparatus. This Salmonella typhi protein is Methionyl-tRNA formyltransferase.